The chain runs to 284 residues: Four and a half LIM domains protein 5 (284 aa).

Residues 8-32 (CQYCTASLLGKKYVLKDDSPYCVTC) form a C4-type zinc finger. LIM zinc-binding domains follow at residues 39-100 (NYCE…ECSS), 101-160 (KCFH…KEFA), 161-220 (HYCN…LYAN), and 223-283 (VACS…MDTD).

Interacts with CREM (via the third LIM domain). Interacts (via second LIM domain) with SPAG8. Testis-specific (at protein level).

It localises to the nucleus. Functionally, may be involved in the regulation of spermatogenesis. Stimulates CREM transcriptional activity in a phosphorylation-independent manner. This Homo sapiens (Human) protein is Four and a half LIM domains protein 5 (FHL5).